A 262-amino-acid chain; its full sequence is MKTPFGKTPGQRSRADAGHAGVSANMMKKRTSHKKHRSSVGPSKPVSQPRRNIVGCRIQHGWKEGNGPVTQWKGTVLDQVPVNPSLYLIKYDGFDCVYGLELNKDERVSALEVLPDRVATSRISDAHLADTMIGKAVEHMFETEDGSKDEWRGMVLARAPVMNTWFYITYEKDPVLYMYQLLDDYKEGDLRIMPDSNDSPPAEREPGEVVDSLVGKQVEYAKEDGSKRTGMVIHQVEAKPSVYFIKFDDDFHIYVYDLVKTS.

The tract at residues M1 to R51 is disordered. Residues K7 and K28 each participate in a glycyl lysine isopeptide (Lys-Gly) (interchain with G-Cter in SUMO2) cross-link. The span at M27–S38 shows a compositional bias: basic residues. Position 44 is an N6-acetyllysine; alternate (K44). Residue K44 forms a Glycyl lysine isopeptide (Lys-Gly) (interchain with G-Cter in SUMO2); alternate linkage. The tract at residues I53–D116 is tudor-like domain 1. A histone H3K4me3 and H3R8me2a binding region spans residues G93 to Y98. A phosphoserine; by AURKA mark is found at S109 and S124. The tract at residues M132–M193 is tudor-like domain 2. E142 is a region of interest (histone H3K4me3 and H3R8me2a binding). S199 bears the Phosphoserine mark. Residues L213 to S262 are tudor-like domain 3. The interval D250–H252 is histone H3K4me3 and H3R8me2a binding.

This sequence belongs to the SPIN/STSY family. In terms of assembly, homodimer; may form higher-order oligomers. Interacts with TCF7L2/TCF4; the interaction is direct. Interacts with HABP4 and SERBP1. Interacts with SPINDOC; SPINDOC stabilizes SPIN1 and enhances its association with bivalent H3K4me3K9me3 mark. Interacts with SPOCD1; promoting recruitment of PIWIL4 and SPOCD1 to transposons. In terms of processing, phosphorylated during oocyte meiotic maturation. Highly expressed in ovarian cancer tissues.

It is found in the nucleus. The protein resides in the nucleolus. Functionally, chromatin reader that specifically recognizes and binds histone H3 both trimethylated at 'Lys-4' and 'Lys-9' (H3K4me3K9me3) and is involved in piRNA-mediated retrotransposon silencing during spermatogenesis. Plays a key role in the initiation of the PIWIL4-piRNA pathway, a pathway that directs transposon DNA methylation and silencing in the male embryonic germ cells, by promoting recruitment of DNA methylation machinery to transposons: binds young, but not old, LINE1 transposons, which are specifically marked with H3K4me3K9me3, and promotes the recruitment of PIWIL4 and SPOCD1 to transposons, leading to piRNA-directed DNA methylation. Also recognizes and binds histone H3 both trimethylated at 'Lys-4' and asymmetrically dimethylated at 'Arg-8' (H3K4me3 and H3R8me2a) and acts as an activator of Wnt signaling pathway downstream of PRMT2. In case of cancer, promotes cell cancer proliferation via activation of the Wnt signaling pathway. Overexpression induces metaphase arrest and chromosomal instability. Localizes to active rDNA loci and promotes the expression of rRNA genes. May play a role in cell-cycle regulation during the transition from gamete to embryo. Involved in oocyte meiotic resumption, a process that takes place before ovulation to resume meiosis of oocytes blocked in prophase I: may act by regulating maternal transcripts to control meiotic resumption. The polypeptide is Spindlin-1 (Homo sapiens (Human)).